The primary structure comprises 555 residues: TBCC domain-containing protein 1 (555 aa).

One can recognise a C-CAP/cofactor C-like domain in the interval 302–433 (PEVSPMVIMS…LEDHMAQVGL (132 aa)).

This sequence belongs to the TBCC family.

The protein resides in the cytoplasm. The protein localises to the cytoskeleton. It is found in the microtubule organizing center. Its subcellular location is the centrosome. It localises to the spindle pole. May play a role in the regulation of centrosome and Golgi apparatus positioning. This is TBCC domain-containing protein 1 (TBCCD1) from Gallus gallus (Chicken).